The sequence spans 303 residues: Crk-like protein (303 aa).

The SH2 domain occupies 14–102; that stretch reads WYMGPVTRQE…LDTTTLIEPA (89 aa). The region spanning 123-183 is the SH3 1 domain; the sequence is ENLEYVRTLY…PVPYVEKLVR (61 aa). At tyrosine 127 the chain carries Phosphotyrosine. Residues 184-203 are disordered; the sequence is SSPHGKHGNRNSNSYGIPEP. The residue at position 207 (tyrosine 207) is a Phosphotyrosine. Positions 235–296 constitute an SH3 2 domain; that stretch reads NGPVFAKAIQ…PFTHVKIFDP (62 aa).

Belongs to the CRK family. Interacts with DOCK2 and EPOR. Interacts with phosphorylated CBLB and IRS4. Interacts with INPP5D/SHIP1. Interacts with BCAR1/CAS and NEDD9/HEF1. In terms of processing, phosphorylated on tyrosine. Phosphorylation is prominent during early development, but decreases at later embryonic stages and in newborn mice.

In terms of biological role, may mediate the transduction of intracellular signals. This is Crk-like protein (Crkl) from Mus musculus (Mouse).